Consider the following 538-residue polypeptide: Putative cysteine ligase BshC (538 aa).

Residues Ile-248–Leu-268 are a coiled coil.

This sequence belongs to the BshC family.

Its function is as follows. Involved in bacillithiol (BSH) biosynthesis. May catalyze the last step of the pathway, the addition of cysteine to glucosamine malate (GlcN-Mal) to generate BSH. The chain is Putative cysteine ligase BshC from Bacillus cereus (strain G9842).